A 606-amino-acid chain; its full sequence is MACPF domain-containing protein At4g24290 (606 aa).

Positions 1–332 (MALRLPASKA…PPIEELHQFL (332 aa)) constitute an MACPF domain.

It belongs to the complement C6/C7/C8/C9 (TC 1.C.39) family.

Its function is as follows. Negatively controls the salicylic acid (SA)-mediated pathway of programmed cell death in plant immunity. The chain is MACPF domain-containing protein At4g24290 from Arabidopsis thaliana (Mouse-ear cress).